We begin with the raw amino-acid sequence, 280 residues long: MSLTTALTYALPHRLLSSMARSLAYSDDPRVSRWLIDTVTRKFNVNLDEAANPDPRSYATFNQFFTRALKPGARVADADPRSLVMPADGRISQLGRIEAGRIFQAKGQSFTAAELLGSDEDAKPYNDGLYATVYLSPRDYHRVHMPWTGTLRETVHVPGRLFSVGPAAVNGVPRLFARNERLVCHFDTSFGPMVSVMVGALLVSGVETVWSGEEIPAYGDRITRKDYRGQGIQLERFAEMARFNYGSTVIVLLPPGVAEFAPQLGAESPVQLGQALAKLR.

Residues Asp-88, His-144, and Ser-247 each act as charge relay system; for autoendoproteolytic cleavage activity in the active site. Ser-247 serves as the catalytic Schiff-base intermediate with substrate; via pyruvic acid; for decarboxylase activity. Ser-247 carries the pyruvic acid (Ser); by autocatalysis modification.

This sequence belongs to the phosphatidylserine decarboxylase family. PSD-B subfamily. Prokaryotic type I sub-subfamily. Heterodimer of a large membrane-associated beta subunit and a small pyruvoyl-containing alpha subunit. It depends on pyruvate as a cofactor. Is synthesized initially as an inactive proenzyme. Formation of the active enzyme involves a self-maturation process in which the active site pyruvoyl group is generated from an internal serine residue via an autocatalytic post-translational modification. Two non-identical subunits are generated from the proenzyme in this reaction, and the pyruvate is formed at the N-terminus of the alpha chain, which is derived from the carboxyl end of the proenzyme. The autoendoproteolytic cleavage occurs by a canonical serine protease mechanism, in which the side chain hydroxyl group of the serine supplies its oxygen atom to form the C-terminus of the beta chain, while the remainder of the serine residue undergoes an oxidative deamination to produce ammonia and the pyruvoyl prosthetic group on the alpha chain. During this reaction, the Ser that is part of the protease active site of the proenzyme becomes the pyruvoyl prosthetic group, which constitutes an essential element of the active site of the mature decarboxylase.

It is found in the cell membrane. It catalyses the reaction a 1,2-diacyl-sn-glycero-3-phospho-L-serine + H(+) = a 1,2-diacyl-sn-glycero-3-phosphoethanolamine + CO2. It functions in the pathway phospholipid metabolism; phosphatidylethanolamine biosynthesis; phosphatidylethanolamine from CDP-diacylglycerol: step 2/2. Catalyzes the formation of phosphatidylethanolamine (PtdEtn) from phosphatidylserine (PtdSer). The chain is Phosphatidylserine decarboxylase proenzyme from Stenotrophomonas maltophilia (strain R551-3).